Here is a 493-residue protein sequence, read N- to C-terminus: Endothelial lipase (493 aa).

Positions 1–23 are cleaved as a signal peptide; that stretch reads MRDPVFLLGFWSLYCCFPAGSLT. A disulfide bond links Cys-66 and Cys-79. Asn-67 and Asn-82 each carry an N-linked (GlcNAc...) asparagine glycan. Ser-171 acts as the Nucleophile in catalysis. Residue Asp-195 is the Charge relay system of the active site. A disulfide bridge links Cys-254 with Cys-274. The active-site Charge relay system is the His-276. Disulfide bonds link Cys-299-Cys-318 and Cys-310-Cys-313. Residue 327-339 participates in heparin binding; sequence KMRKKRNSKMYLK. The region spanning 349–484 is the PLAT domain; sequence YHYQLKVHMF…SPGQELWFYK (136 aa). A glycan (N-linked (GlcNAc...) asparagine) is linked at Asn-395. A disulfide bond links Cys-465 and Cys-485.

Belongs to the AB hydrolase superfamily. Lipase family. In terms of assembly, head to tail Homodimer. Interacts with apolipoprotein C-2.

The protein localises to the secreted. The enzyme catalyses a triacylglycerol + H2O = a diacylglycerol + a fatty acid + H(+). The catalysed reaction is a 1,2-diacyl-sn-glycero-3-phosphocholine + H2O = a 2-acyl-sn-glycero-3-phosphocholine + a fatty acid + H(+). It carries out the reaction 1,2,3-tri-(9Z-octadecenoyl)-glycerol + H2O = di-(9Z)-octadecenoylglycerol + (9Z)-octadecenoate + H(+). It catalyses the reaction 1,2,3-tributanoylglycerol + H2O = dibutanoylglycerol + butanoate + H(+). The enzyme catalyses 1,2-dihexadecanoyl-sn-glycero-3-phosphocholine + H2O = hexadecanoyl-sn-glycero-3-phosphocholine + hexadecanoate + H(+). In terms of biological role, exerts both phospholipase and triglyceride lipase activities. More active as a phospholipase than a triglyceride lipase. Hydrolyzes triglycerides, both with short-chain fatty acyl groups (tributyrin) and long-chain fatty acyl groups (triolein) with similar levels of activity toward both types of substrates. Hydrolyzes high density lipoproteins (HDL) more efficiently than other lipoproteins. The sequence is that of Endothelial lipase (Lipg) from Rattus norvegicus (Rat).